The following is a 331-amino-acid chain: Carbonic anhydrase-related protein 11 (331 aa).

The N-terminal stretch at 1 to 23 (MGGAARLSAPRALVLWAVLGAAA) is a signal peptide. An Alpha-carbonic anhydrase domain is found at 33–306 (DWWSYKDNLQ…LAHRALRGNR (274 aa)). 4 N-linked (GlcNAc...) asparagine glycosylation sites follow: Asn118, Asn170, Asn189, and Asn263. Residues 303–331 (RGNRDPRHPERRCRGPNYRLHVDGAPHGR) form a disordered region. The span at 322–331 (LHVDGAPHGR) shows a compositional bias: basic and acidic residues.

The protein belongs to the alpha-carbonic anhydrase family.

The protein localises to the secreted. Does not have a catalytic activity. The sequence is that of Carbonic anhydrase-related protein 11 (CA11) from Sus scrofa (Pig).